A 116-amino-acid polypeptide reads, in one-letter code: MQITVMKGKIHRATVTDADLNYEGSLTVDMDLVDAAGMRVYEKVSVVNINNGARFETYIIEGKRGSGEICLNGAAARLGMKGDKIIVITYAQVEENELPIDYIPKVVHVDENNRKR.

Serine 25 serves as the catalytic Schiff-base intermediate with substrate; via pyruvic acid. Residue serine 25 is modified to Pyruvic acid (Ser). A substrate-binding site is contributed by threonine 57. Tyrosine 58 (proton donor) is an active-site residue. 73 to 75 (GAA) contacts substrate.

It belongs to the PanD family. Heterooctamer of four alpha and four beta subunits. Pyruvate is required as a cofactor. Is synthesized initially as an inactive proenzyme, which is activated by self-cleavage at a specific serine bond to produce a beta-subunit with a hydroxyl group at its C-terminus and an alpha-subunit with a pyruvoyl group at its N-terminus.

Its subcellular location is the cytoplasm. The enzyme catalyses L-aspartate + H(+) = beta-alanine + CO2. It functions in the pathway cofactor biosynthesis; (R)-pantothenate biosynthesis; beta-alanine from L-aspartate: step 1/1. Catalyzes the pyruvoyl-dependent decarboxylation of aspartate to produce beta-alanine. The protein is Aspartate 1-decarboxylase of Leptospira borgpetersenii serovar Hardjo-bovis (strain JB197).